Consider the following 237-residue polypeptide: Lipoprotein-releasing system ATP-binding protein LolD (237 aa).

The region spanning Ile8–Ala236 is the ABC transporter domain. Gly40–Ser47 contributes to the ATP binding site.

The protein belongs to the ABC transporter superfamily. Lipoprotein translocase (TC 3.A.1.125) family. The complex is composed of two ATP-binding proteins (LolD) and two transmembrane proteins (LolC and LolE).

Its subcellular location is the cell inner membrane. Its function is as follows. Part of the ABC transporter complex LolCDE involved in the translocation of mature outer membrane-directed lipoproteins, from the inner membrane to the periplasmic chaperone, LolA. Responsible for the formation of the LolA-lipoprotein complex in an ATP-dependent manner. The protein is Lipoprotein-releasing system ATP-binding protein LolD of Leptospira interrogans serogroup Icterohaemorrhagiae serovar Lai (strain 56601).